The following is a 532-amino-acid chain: Phosphoenolpyruvate carboxykinase (ATP) (532 aa).

Substrate is bound by residues arginine 60, tyrosine 194, and lysine 200. ATP contacts are provided by residues lysine 200, histidine 219, and 237–245; that span reads GLSGTGKTT. Residues lysine 200 and histidine 219 each coordinate Mn(2+). Aspartate 258 is a binding site for Mn(2+). Residues glutamate 286, arginine 324, and threonine 449 each coordinate ATP. Arginine 324 is a binding site for substrate.

This sequence belongs to the phosphoenolpyruvate carboxykinase (ATP) family. It depends on Mn(2+) as a cofactor.

Its subcellular location is the cytoplasm. The enzyme catalyses oxaloacetate + ATP = phosphoenolpyruvate + ADP + CO2. Its pathway is carbohydrate biosynthesis; gluconeogenesis. Its function is as follows. Involved in the gluconeogenesis. Catalyzes the conversion of oxaloacetate (OAA) to phosphoenolpyruvate (PEP) through direct phosphoryl transfer between the nucleoside triphosphate and OAA. The protein is Phosphoenolpyruvate carboxykinase (ATP) of Cereibacter sphaeroides (strain ATCC 17025 / ATH 2.4.3) (Rhodobacter sphaeroides).